Consider the following 86-residue polypeptide: Protein K3 homolog (86 aa).

Residues 15–86 enclose the S1 motif domain; the sequence is NINDITQGII…LKGYIDVSIV (72 aa).

The protein belongs to the poxviridae K3 protein family. As to quaternary structure, interacts with host PKR kinase.

In terms of biological role, viral mimic of eIF-2-alpha that acts as a pseudosubstrate for EIF2AK2/PKR kinase. Inhibits therefore eIF-2-alpha phosphorylation by host EIF2AK2/PKR kinase and prevents protein synthesis shutoff. This is Protein K3 homolog from Sus scrofa (Pig).